The chain runs to 588 residues: Autophagy-related protein 22-1 (588 aa).

The chain crosses the membrane as a helical span at residues 35 to 55 (YGWAAEVFTVCAMGSFLPITL). Residue asparagine 84 is glycosylated (N-linked (GlcNAc...) asparagine). Helical transmembrane passes span 109-129 (TASF…ILII), 144-164 (LLVS…AVTP), and 168-188 (LLGG…FVLL). Asparagine 255 is a glycosylation site (N-linked (GlcNAc...) asparagine). 8 helical membrane passes run 270–290 (GIGI…LVIV), 301–321 (LVLF…AFWL), 365–385 (ILLF…VSGT), 399–419 (AALG…AFSW), 434–454 (IIAC…GFIP), 471–493 (FPLG…SFFG), 507–527 (LYAI…GFIT), and 536–556 (AFFF…LVDA).

It belongs to the ATG22 family.

It localises to the vacuole membrane. In terms of biological role, vacuolar effluxer which mediate the efflux of amino acids resulting from autophagic degradation. The release of autophagic amino acids allows the maintenance of protein synthesis and viability during nitrogen starvation. The protein is Autophagy-related protein 22-1 (atg22-1) of Emericella nidulans (strain FGSC A4 / ATCC 38163 / CBS 112.46 / NRRL 194 / M139) (Aspergillus nidulans).